Here is a 605-residue protein sequence, read N- to C-terminus: 9-cis-epoxycarotenoid dioxygenase NCED1, chloroplastic (605 aa).

The N-terminal 16 residues, 1-16 (MATTTSHATNTWIKTK), are a transit peptide targeting the chloroplast. The disordered stretch occupies residues 55 to 89 (ILHFPKQSSNYQTPKNNTISHPKQENNNSSSSSTS). The segment covering 60–75 (KQSSNYQTPKNNTISH) has biased composition (polar residues). Positions 80–89 (NNNSSSSSTS) are enriched in low complexity. Positions 302, 351, 416, and 592 each coordinate Fe cation.

The protein belongs to the carotenoid oxygenase family. The cofactor is Fe(2+). In terms of tissue distribution, expressed in developing and ripening fruits. Highly expressed in pulp. Observed in unpollinated ovaries (e.g. ovules, placenta and pericarp). Expressed in flowers.

Its subcellular location is the plastid. The protein localises to the chloroplast stroma. The catalysed reaction is a 9-cis-epoxycarotenoid + O2 = a 12'-apo-carotenal + 2-cis,4-trans-xanthoxin. It carries out the reaction 9-cis-violaxanthin + O2 = (3S,5R,6S)-5,6-epoxy-3-hydroxy-5,6-dihydro-12'-apo-beta-caroten-12'-al + 2-cis,4-trans-xanthoxin. It catalyses the reaction 9'-cis-neoxanthin + O2 = (3S,5R,6R)-3,5-dihydroxy-6,7-didehydro-5,6-dihydro-12'-apo-beta-caroten-12'-al + 2-cis,4-trans-xanthoxin. It participates in plant hormone biosynthesis; abscisate biosynthesis. Its function is as follows. Has a 11,12(11',12') 9-cis epoxycarotenoid cleavage activity. Catalyzes the first step of abscisic-acid (ABA) biosynthesis from carotenoids. Required for ABA accumulation upon drought. Required for ABA-mediated regulation of anther/pollen development, including metabolism, cell wall modification and transcription level. Positive regulator of fruit ripening involved in the biosynthesis of abscisic acid (ABA); initiates ABA biosynthesis at the onset of fruit ripening. Modulates the degree of pigmentation and carotenoid composition as well as pectin catabolism during ripening and may regulate the ethylene production and action in climacteric tomato fruit. This is 9-cis-epoxycarotenoid dioxygenase NCED1, chloroplastic from Solanum lycopersicum (Tomato).